Consider the following 276-residue polypeptide: Protein-glutamine gamma-glutamyltransferase (276 aa).

It belongs to the bacillus TGase family.

It carries out the reaction L-glutaminyl-[protein] + L-lysyl-[protein] = [protein]-L-lysyl-N(6)-5-L-glutamyl-[protein] + NH4(+). Probably plays a role in the assembly of the spore coat proteins by catalyzing epsilon-(gamma-glutamyl)lysine cross-links. The polypeptide is Protein-glutamine gamma-glutamyltransferase (Bacillus mycoides (strain KBAB4) (Bacillus weihenstephanensis)).